Reading from the N-terminus, the 155-residue chain is Protein-export protein SecB (155 aa).

This sequence belongs to the SecB family. As to quaternary structure, homotetramer, a dimer of dimers. One homotetramer interacts with 1 SecA dimer.

Its subcellular location is the cytoplasm. Its function is as follows. One of the proteins required for the normal export of preproteins out of the cell cytoplasm. It is a molecular chaperone that binds to a subset of precursor proteins, maintaining them in a translocation-competent state. It also specifically binds to its receptor SecA. This is Protein-export protein SecB from Vibrio atlanticus (strain LGP32) (Vibrio splendidus (strain Mel32)).